Reading from the N-terminus, the 801-residue chain is Cadherin-20 (801 aa).

The N-terminal stretch at 1-34 is a signal peptide; that stretch reads MWTTGRMSNAKSWLGLGTSLYFWALMDLATTVLS. The propeptide occupies 35-59; it reads STPMPEVELDTLFSGKPQSHQRSRR. Residues 60-619 lie on the Extracellular side of the membrane; that stretch reads SWVWNQFFVL…AYMLPVSLSR (560 aa). Cadherin domains lie at 61–165, 166–274, 275–389, 390–494, and 494–610; these read WVWN…EPKF, LDGP…PPRF, PQKH…PPVF, EPRF…APEF, and FPRF…SPEA. An N-linked (GlcNAc...) asparagine glycan is attached at asparagine 261. N-linked (GlcNAc...) asparagine glycans are attached at residues asparagine 420, asparagine 461, and asparagine 542. Residues 620–640 traverse the membrane as a helical segment; that stretch reads GALIAILACVFVLLVLVLLIL. Residues 641-801 are Cytoplasmic-facing; that stretch reads SMRRHRKQPY…GASEGPSPLW (161 aa).

Its subcellular location is the cell membrane. Cadherins are calcium-dependent cell adhesion proteins. They preferentially interact with themselves in a homophilic manner in connecting cells; cadherins may thus contribute to the sorting of heterogeneous cell types. The protein is Cadherin-20 (Cdh20) of Rattus norvegicus (Rat).